The sequence spans 546 residues: MAAKDVKFDTDARDRMLRGVNILADAVKVTLGPKGRNVVIDKSFGAPRITKDGVSVAKEIELSDKFENMGAQMVKEVASRTNDEAGDGTTTATVLAQAIIKEGLKAVAAGMNPMDLKRGIDLATAKVVESIKAASRPVNDQHEVAQVGTISANGEAQIGRFIADAMQKVGNEGVITVEENKGLETEVEVVEGMQFDRGYLSPYFVTNADKMTAELEDVFILLHEKKLSSLQPMVPLLESVIQAQRPLLIVAEDVEGEALATLVVNKLRGGLKIAAVKAPGFGDRRKAMLQDIAILTGGQVISEDLGMKLENVTIDMLGRAKKVSINKDNTTIVDGAGEKAEIEARVSQIRTQIEETTSDYDREKLQERVAKLAGGVAVIRVGGMTEVEVKERKDRVDDALNATRAAVQEGIVVGGGVALIQAGKVLDGLTGENPDQNAGITIVRRALEAPLRQIAQNAGVDGSVVAGKVRESDDKAFGFNAQTEEYGDMFKFGVIDPAKVVRTALEDAASVASLLITTEAMIADKPEPKSAPAGGMGGMGGMDGMM.

ATP contacts are provided by residues 30 to 33 (TLGP), Lys-51, 87 to 91 (DGTTT), Gly-415, and Asp-496. Positions 526-546 (PEPKSAPAGGMGGMGGMDGMM) are disordered. The span at 534 to 546 (GGMGGMGGMDGMM) shows a compositional bias: gly residues.

The protein belongs to the chaperonin (HSP60) family. As to quaternary structure, forms a cylinder of 14 subunits composed of two heptameric rings stacked back-to-back. Interacts with the co-chaperonin GroES.

The protein localises to the cytoplasm. It carries out the reaction ATP + H2O + a folded polypeptide = ADP + phosphate + an unfolded polypeptide.. Functionally, together with its co-chaperonin GroES, plays an essential role in assisting protein folding. The GroEL-GroES system forms a nano-cage that allows encapsulation of the non-native substrate proteins and provides a physical environment optimized to promote and accelerate protein folding. The sequence is that of Chaperonin GroEL from Rhodopseudomonas palustris.